A 327-amino-acid polypeptide reads, in one-letter code: Phenylalanine--tRNA ligase alpha subunit (327 aa).

Glutamate 252 is a binding site for Mg(2+).

This sequence belongs to the class-II aminoacyl-tRNA synthetase family. Phe-tRNA synthetase alpha subunit type 1 subfamily. Tetramer of two alpha and two beta subunits. The cofactor is Mg(2+).

It is found in the cytoplasm. The enzyme catalyses tRNA(Phe) + L-phenylalanine + ATP = L-phenylalanyl-tRNA(Phe) + AMP + diphosphate + H(+). This chain is Phenylalanine--tRNA ligase alpha subunit, found in Klebsiella pneumoniae (strain 342).